The chain runs to 443 residues: Cyclin-A2-1 (443 aa).

A compositionally biased stretch (basic residues) spans 1–10 (MHRASSKHTN). The segment at 1-61 (MHRASSKHTN…KRVARPSNKR (61 aa)) is disordered. Positions 11 to 25 (AKKEAISTSKIRDNN) are enriched in basic and acidic residues.

Belongs to the cyclin family. Cyclin AB subfamily. In terms of tissue distribution, expressed in tissues with active cell division: apical root and shoot meristems, lateral root and leaf primordia, floral meristems and developing pollen.

In terms of biological role, may negatively regulate endocycles and act as a regulator of ploidy levels in endoreduplication. In Arabidopsis thaliana (Mouse-ear cress), this protein is Cyclin-A2-1 (CYCA2-1).